A 122-amino-acid chain; its full sequence is Phosphoribosyl-ATP pyrophosphatase (122 aa).

Belongs to the PRA-PH family.

The protein resides in the cytoplasm. The enzyme catalyses 1-(5-phospho-beta-D-ribosyl)-ATP + H2O = 1-(5-phospho-beta-D-ribosyl)-5'-AMP + diphosphate + H(+). It participates in amino-acid biosynthesis; L-histidine biosynthesis; L-histidine from 5-phospho-alpha-D-ribose 1-diphosphate: step 2/9. This chain is Phosphoribosyl-ATP pyrophosphatase, found in Burkholderia mallei (strain NCTC 10247).